A 467-amino-acid polypeptide reads, in one-letter code: ATP synthase subunit beta (467 aa).

Residue 156–163 participates in ATP binding; it reads GGAGVGKT.

Belongs to the ATPase alpha/beta chains family. As to quaternary structure, F-type ATPases have 2 components, CF(1) - the catalytic core - and CF(0) - the membrane proton channel. CF(1) has five subunits: alpha(3), beta(3), gamma(1), delta(1), epsilon(1). CF(0) has three main subunits: a(1), b(2) and c(9-12). The alpha and beta chains form an alternating ring which encloses part of the gamma chain. CF(1) is attached to CF(0) by a central stalk formed by the gamma and epsilon chains, while a peripheral stalk is formed by the delta and b chains.

It localises to the cell inner membrane. It carries out the reaction ATP + H2O + 4 H(+)(in) = ADP + phosphate + 5 H(+)(out). Its function is as follows. Produces ATP from ADP in the presence of a proton gradient across the membrane. The catalytic sites are hosted primarily by the beta subunits. This Cupriavidus metallidurans (strain ATCC 43123 / DSM 2839 / NBRC 102507 / CH34) (Ralstonia metallidurans) protein is ATP synthase subunit beta.